The chain runs to 310 residues: 300 kDa antigen AG231 (310 aa).

Residues 1–23 (VTGSCVVTGSCVVTDSCVVTGSC) are 4 X 6 AA tandem repeats of V-V-T-G-S-C. Residues 29–106 (VTTQESVTTQ…TQEPVTVEEH (78 aa)) form a 13 X 6 AA tandem repeats of V-V-[TI]-[QE]-E-[PH] region. Residues 53–101 (VTIEEPVTTQEPVTIEEPVTTQEPVTTQEPVTTQEPVTTQEPVTTQEPV) show a composition bias toward low complexity. A disordered region spans residues 53-310 (VTIEEPVTTQ…FGRGNKNDKK (258 aa)). 2 stretches are compositionally biased toward basic and acidic residues: residues 103–114 (VEEHIDEKKGSE) and 147–160 (NKND…KKPS). The 45 AA repeat 1 repeat unit spans residues 107-152 (IDEKKGSEGDNISLSSLSEETEEKSHTKKKKSSWLKFGRGNKNDKK). Residues 176-190 (TDSQISVNAQDSVTI) show a composition bias toward polar residues. A 13 X 6 AA approximate tandem repeats region spans residues 188-265 (VTIQEPTATQ…TQEPSTTQEH (78 aa)). The segment covering 191–235 (QEPTATQEPPTTQELTATQEPTTTQETVTEQEPTTTQETVTAQEP) has biased composition (low complexity). The segment covering 236-263 (ITTQEPVTAQEPVTTQELIATQEPSTTQ) has biased composition (polar residues). Positions 264 to 273 (EHADEKKASE) are enriched in basic and acidic residues. A 45 AA repeat 2 repeat occupies 266 to 310 (ADEKKASEGDNISLSRLSEETEEKSHTKKKSSWLKFGRGNKNDKK).

The chain is 300 kDa antigen AG231 (FIRA) from Plasmodium falciparum (isolate FC27 / Papua New Guinea).